The following is a 215-amino-acid chain: Sodium channel regulatory subunit beta-2 (215 aa).

The N-terminal stretch at 1 to 29 (MHRDAWLPRPAFSLTGLSLFFSLVPPGRS) is a signal peptide. The Extracellular segment spans residues 30–157 (MEVTAPTTLS…LEVPPERDST (128 aa)). The Ig-like C2-type domain maps to 32–154 (VTAPTTLSVL…QVLLEVPPER (123 aa)). 3 N-linked (GlcNAc...) asparagine glycosylation sites follow: Asn42, Asn66, and Asn74. Cystine bridges form between Cys50–Cys127 and Cys72–Cys75. The chain crosses the membrane as a helical span at residues 158–179 (VAVIVGASVGGFLAVVILVLMV). Over 180 to 215 (VKCVRRKKEQKLSTDDLKTEEEGKMDGEGNAEDGTK) the chain is Cytoplasmic. Residues 188 to 215 (EQKLSTDDLKTEEEGKMDGEGNAEDGTK) are disordered. A compositionally biased stretch (basic and acidic residues) spans 189–215 (QKLSTDDLKTEEEGKMDGEGNAEDGTK). At Ser192 the chain carries Phosphoserine.

It belongs to the sodium channel auxiliary subunit SCN2B (TC 8.A.17) family. In terms of assembly, a voltage-gated sodium (Nav) channel consists of an ion-conducting pore-forming alpha subunit functional on its own that is regulated by one or more beta subunits. The beta subunit SCN2B is disulfide-linked to the pore-forming alpha subunit. Interacts with SCN1A; regulatory subunit of SCN1A/Nav1.1. Interacts with SCN2A; regulatory subunit of SCN2A/Nav1.2. Interacts with SCN3A; regulatory subunit of SCN3A/Nav1.3. Interacts with SCN5A; regulatory subunit of SCN5A/Nav1.5. Interacts with SCN8A; regulatory subunit of SCN8A/Nav1.6. Interacts with SCN9A; regulatory subunit of SCN9A/Nav1.7. Interacts with SCN10A; regulatory subunit of SCN10A/Nav1.8. Interacts with TNR; may play a crucial role in clustering and regulation of activity of SCN2B-containing Nav channels at nodes of Ranvier.

It is found in the cell membrane. It localises to the cell projection. The protein resides in the axon. In terms of biological role, regulatory subunit of multiple voltage-gated sodium (Nav) channels directly mediating the depolarization of excitable membranes. Navs, also called VGSCs (voltage-gated sodium channels) or VDSCs (voltage-dependent sodium channels), operate by switching between closed and open conformations depending on the voltage difference across the membrane. In the open conformation they allow Na(+) ions to selectively pass through the pore, along their electrochemical gradient. The influx of Na+ ions provokes membrane depolarization, initiating the propagation of electrical signals throughout cells and tissues. The accessory beta subunits participate in localization and functional modulation of the Nav channels. Modulates the activity of SCN1A/Nav1.1, SCN2A/Nav1.2, SCN2A/Nav1.3, SCN5A/Nav1.5, SCN8A/Nav1.6, SCN9A/Nav1.7 and SCN10A/Nav1.8. The protein is Sodium channel regulatory subunit beta-2 of Mus musculus (Mouse).